A 505-amino-acid polypeptide reads, in one-letter code: MVSIRPDEISAILKQQISDYDKSVSVSNVGTVLQIGDGIARVYGLEQVMAGELVEFEDGTEGIALNLEDDNVGAVLMGEGVGIQEGSTVKATGKIASVPVSDEMLGRVVTPLGQPMDGKGDIPSTESRLIESIAPGIIKRKSVHEPLQTGITSIDSMIPIGRGQRELIIGDRQTGKTAIAIDTIINQKGEDVVCVYVAVGQKAASVANVVEVLREKGALDYTVIVAASASDAAALQYLAPYTGAAIAESFMYKGKATLVIYDDLTKQAQAYRQMSLLLRRPPGREAYPGDVFYCHSRLLERAAKLSDAMGGGSMTALPIIETQAGDVSAYIPTNVISITDGQIFLSSDLFNSGLRPAINVGISVSRVGGAAQTKAIKKIAGTLKLELAQFDELAAFSQFASDLDEATQKQLGRGKRLRELLKQPQFAPLNLAEQVAIVYAGVKGLIDEVPEDQVTQFSRELRDYLKTNKPEYITKVQTEKVLNEDAETILKAAINEVKSSMLASA.

170–177 is an ATP binding site; it reads GDRQTGKT.

It belongs to the ATPase alpha/beta chains family. In terms of assembly, F-type ATPases have 2 components, CF(1) - the catalytic core - and CF(0) - the membrane proton channel. CF(1) has five subunits: alpha(3), beta(3), gamma(1), delta(1), epsilon(1). CF(0) has four main subunits: a(1), b(1), b'(1) and c(9-12).

It is found in the cellular thylakoid membrane. The enzyme catalyses ATP + H2O + 4 H(+)(in) = ADP + phosphate + 5 H(+)(out). In terms of biological role, produces ATP from ADP in the presence of a proton gradient across the membrane. The alpha chain is a regulatory subunit. This Prochlorococcus marinus (strain MIT 9303) protein is ATP synthase subunit alpha.